The chain runs to 341 residues: CRISPR-associated endonuclease Cas1 (341 aa).

3 residues coordinate Mn(2+): E173, H242, and E257.

This sequence belongs to the CRISPR-associated endonuclease Cas1 family. Homodimer, forms a heterotetramer with a Cas2 homodimer. It depends on Mg(2+) as a cofactor. The cofactor is Mn(2+).

Functionally, CRISPR (clustered regularly interspaced short palindromic repeat), is an adaptive immune system that provides protection against mobile genetic elements (viruses, transposable elements and conjugative plasmids). CRISPR clusters contain spacers, sequences complementary to antecedent mobile elements, and target invading nucleic acids. CRISPR clusters are transcribed and processed into CRISPR RNA (crRNA). Acts as a dsDNA endonuclease. Involved in the integration of spacer DNA into the CRISPR cassette. This Korarchaeum cryptofilum (strain OPF8) protein is CRISPR-associated endonuclease Cas1.